A 367-amino-acid chain; its full sequence is MYDWFKQMRKESPVYYDGKVWNLFKYEDCKMVLNDHKRFSSNLTGYNDKLEMLRSGKVFFDIPTRYTMLTSDPPLHDELRNLTADAFNPSNLPVDFVREVTVKLLSELDEEFDVIESFAIPLPILVISKMLGINPDVKKVKDWSDLVALRLGRADEIFSIGRKYLELISFSKKELDSRKGKEIVDLTGKIANSNLSELEKEGYFILLMIAGNETTTNLIGNAIEDFTLYNSWDYVREKGALKAVEEALRFSPPVMRTIRVTKEKVKIRDQVIDEGELVRVWIASANRDEEVFKDPDSFIPDRTPNPHLSFGSGIHLCLGAPLARLEARIALEEFAKKFRVKEIVKKEKIDNEVLNGYRKLVVRVERA.

His-76, Arg-80, Thr-257, Arg-259, His-315, and Cys-317 together coordinate heme.

It belongs to the cytochrome P450 family. Heme is required as a cofactor.

Its subcellular location is the cytoplasm. In Sulfurisphaera tokodaii (strain DSM 16993 / JCM 10545 / NBRC 100140 / 7) (Sulfolobus tokodaii), this protein is Cytochrome P450 119 (cyp119).